Consider the following 312-residue polypeptide: tRNA pseudouridine synthase B (312 aa).

Residue Asp-46 is the Nucleophile of the active site. Tyr-74, Tyr-177, and Leu-198 together coordinate substrate.

This sequence belongs to the pseudouridine synthase TruB family. Type 1 subfamily.

The enzyme catalyses uridine(55) in tRNA = pseudouridine(55) in tRNA. Its function is as follows. Responsible for synthesis of pseudouridine from uracil-55 in the psi GC loop of transfer RNAs. This chain is tRNA pseudouridine synthase B, found in Buchnera aphidicola subsp. Acyrthosiphon pisum (strain APS) (Acyrthosiphon pisum symbiotic bacterium).